Here is a 631-residue protein sequence, read N- to C-terminus: Phosphomethylpyrimidine synthase (631 aa).

Substrate is bound by residues asparagine 239, methionine 268, tyrosine 297, histidine 333, 353–355, 394–397, and glutamate 433; these read SRG and DGLR. Position 437 (histidine 437) interacts with Zn(2+). Position 460 (tyrosine 460) interacts with substrate. Histidine 501 is a Zn(2+) binding site. Cysteine 581, cysteine 584, and cysteine 589 together coordinate [4Fe-4S] cluster.

This sequence belongs to the ThiC family. Homodimer. The cofactor is [4Fe-4S] cluster.

It carries out the reaction 5-amino-1-(5-phospho-beta-D-ribosyl)imidazole + S-adenosyl-L-methionine = 4-amino-2-methyl-5-(phosphooxymethyl)pyrimidine + CO + 5'-deoxyadenosine + formate + L-methionine + 3 H(+). It functions in the pathway cofactor biosynthesis; thiamine diphosphate biosynthesis. Its function is as follows. Catalyzes the synthesis of the hydroxymethylpyrimidine phosphate (HMP-P) moiety of thiamine from aminoimidazole ribotide (AIR) in a radical S-adenosyl-L-methionine (SAM)-dependent reaction. The sequence is that of Phosphomethylpyrimidine synthase from Salmonella dublin (strain CT_02021853).